Consider the following 742-residue polypeptide: NAD(P)H-quinone oxidoreductase subunit 5, chloroplastic (742 aa).

A run of 16 helical transmembrane segments spans residues 9–29 (WIIP…LLLI), 40–60 (WAFP…NLAF), 89–109 (IDPL…MVLI), 125–145 (FAYM…SNLI), 147–167 (IYIF…FWFT), 185–205 (GDFG…SFEF), 228–248 (AFLL…HVWL), 256–276 (TPIS…FLVA), 288–308 (IMNI…TLAL), 325–345 (LGYI…FHLI), 352–372 (ALLF…VGYS), 394–414 (TTFL…CFWS), 423–443 (WLYS…TAFY), 544–564 (YPLL…IPLV), 599–619 (FFIN…LAFI), and 720–740 (ISFY…FLFL).

Belongs to the complex I subunit 5 family. In terms of assembly, NDH is composed of at least 16 different subunits, 5 of which are encoded in the nucleus.

It is found in the plastid. The protein resides in the chloroplast thylakoid membrane. The enzyme catalyses a plastoquinone + NADH + (n+1) H(+)(in) = a plastoquinol + NAD(+) + n H(+)(out). It catalyses the reaction a plastoquinone + NADPH + (n+1) H(+)(in) = a plastoquinol + NADP(+) + n H(+)(out). In terms of biological role, NDH shuttles electrons from NAD(P)H:plastoquinone, via FMN and iron-sulfur (Fe-S) centers, to quinones in the photosynthetic chain and possibly in a chloroplast respiratory chain. The immediate electron acceptor for the enzyme in this species is believed to be plastoquinone. Couples the redox reaction to proton translocation, and thus conserves the redox energy in a proton gradient. The sequence is that of NAD(P)H-quinone oxidoreductase subunit 5, chloroplastic (ndhF) from Lemna minor (Common duckweed).